We begin with the raw amino-acid sequence, 619 residues long: Guanylate cyclase soluble subunit beta-1 (619 aa).

H105 contributes to the heme binding site. In terms of domain architecture, Guanylate cyclase spans 421–554; that stretch reads TILFSGIVGF…NTVNLTSRTE (134 aa).

This sequence belongs to the adenylyl cyclase class-4/guanylyl cyclase family. As to quaternary structure, the active enzyme is formed by a heterodimer of an alpha and a beta subunit. Homotetramer; dimer of dimers (in vitro). Heterodimer with GUCY1A1. Can also form inactive homodimers in vitro. Requires heme as cofactor. As to expression, lung and brain.

It is found in the cytoplasm. The catalysed reaction is GTP = 3',5'-cyclic GMP + diphosphate. Its activity is regulated as follows. Activated by nitric oxide in the presence of magnesium or manganese ions. Mediates responses to nitric oxide (NO) by catalyzing the biosynthesis of the signaling molecule cGMP. In Rattus norvegicus (Rat), this protein is Guanylate cyclase soluble subunit beta-1 (Gucy1b1).